The sequence spans 214 residues: Large ribosomal subunit protein uL16 (214 aa).

R32 carries the citrulline modification. K175 is covalently cross-linked (Glycyl lysine isopeptide (Lys-Gly) (interchain with G-Cter in SUMO2)). A Glycyl lysine isopeptide (Lys-Gly) (interchain with G-Cter in ubiquitin) cross-link involves residue K188.

It belongs to the universal ribosomal protein uL16 family. In terms of assembly, component of the large ribosomal subunit. Mature ribosomes consist of a small (40S) and a large (60S) subunit. The 40S subunit contains about 33 different proteins and 1 molecule of RNA (18S). The 60S subunit contains about 49 different proteins and 3 molecules of RNA (28S, 5.8S and 5S). Citrullinated by PADI4. Post-translationally, ufmylated by UFL1.

It localises to the cytoplasm. In terms of biological role, component of the large ribosomal subunit. Plays a role in the formation of actively translating ribosomes. May play a role in the embryonic brain development. The protein is Large ribosomal subunit protein uL16 (RPL10) of Oryctolagus cuniculus (Rabbit).